The sequence spans 723 residues: Catalase-peroxidase (723 aa).

The tryptophyl-tyrosyl-methioninium (Trp-Tyr) (with M-252) cross-link spans 98-226 (WHSAGSYRVG…LAAVMMGLIY (129 aa)). Histidine 99 functions as the Proton acceptor in the catalytic mechanism. A cross-link (tryptophyl-tyrosyl-methioninium (Tyr-Met) (with W-98)) is located at residues 226–252 (YVNPEGVDGNPDPLKTAKDMRVTFARM). Histidine 267 lines the heme b pocket.

This sequence belongs to the peroxidase family. Peroxidase/catalase subfamily. In terms of assembly, homodimer or homotetramer. Requires heme b as cofactor. In terms of processing, formation of the three residue Trp-Tyr-Met cross-link is important for the catalase, but not the peroxidase activity of the enzyme.

It catalyses the reaction H2O2 + AH2 = A + 2 H2O. The enzyme catalyses 2 H2O2 = O2 + 2 H2O. Bifunctional enzyme with both catalase and broad-spectrum peroxidase activity. This Vibrio vulnificus (strain YJ016) protein is Catalase-peroxidase.